The chain runs to 486 residues: Protein hold'em (486 aa).

Positions 166 to 285 (IITTNVNLLV…DCRLLLAFAA (120 aa)) form a DNA-binding region, OB.

This sequence belongs to the MEIOB family. In terms of assembly, interacts with mei-9 and Ercc1.

Its function is as follows. Single-stranded DNA-binding protein required for meiosis. May be involved in the resolution of recombination intermediates into crossovers in the meiotic recombination pathway. The chain is Protein hold'em (hdm) from Drosophila melanogaster (Fruit fly).